Reading from the N-terminus, the 324-residue chain is Short-chain dehydrogenase/reductase iacJ (324 aa).

Positions 42, 66, 93, 120, 204, 208, and 239 each coordinate NADP(+). Catalysis depends on tyrosine 204, which acts as the Proton donor. The active-site Lowers pKa of active site Tyr is lysine 208.

It belongs to the short-chain dehydrogenases/reductases (SDR) family.

It participates in secondary metabolite biosynthesis. Its function is as follows. Short-chain dehydrogenase/reductase; part of the gene cluster that mediates the biosynthesis of iso-A82775C, a enylepoxycyclohexane and biosynthetic precursor of the chloropestolide anticancer natural products. Within the cluster, the prenyltransferase iacE prenylates siccayne to generate pestalodiol E, using dimethylallyl diphosphate (DMAPP) as cosubstrate. The probable oxidoreductase iacF is then involved in the epoxidation of pestalodiol F to pestalodiol F, which is further converted to pestalofone A by the short-chain dehydrogenase/reductase iacG. Iso-A82775C is subsequently generated from pestalofone A by the short-chain dehydrogenase/reductase iacC. Iso-A82775C is further condensed with maldoxin via a Diels-Alder reaction to produce the anticancer natural products chloropestolides A to E. This is Short-chain dehydrogenase/reductase iacJ from Pestalotiopsis fici (strain W106-1 / CGMCC3.15140).